The following is a 482-amino-acid chain: Guanine nucleotide exchange factor SRM1 (482 aa).

Over residues 1 to 11 the composition is skewed to polar residues; sequence MVKRTVATNGD. The disordered stretch occupies residues 1-22; that stretch reads MVKRTVATNGDASGAHRAKKMS. The Nuclear localization signal motif lies at 15-26; sequence AHRAKKMSKTHA. RCC1 repeat units follow at residues 45–101, 103–152, 183–238, 239–291, 292–347, 349–411, and 412–466; these read PLDI…ALDE, SNVW…TPAK, NGEV…FLDE, EGMV…ALTK, DNKL…ILSQ, GDLY…AVAQ, and NGIA…SGGV. Residues 128 to 158 are disordered; it reads KDMDADDSSDDEDGDLNELESTPAKIPRESF. Acidic residues predominate over residues 131 to 145; that stretch reads DADDSSDDEDGDLNE. Serine 135 and serine 136 each carry phosphoserine.

In terms of assembly, component of a multicomponent complex composed of six to seven proteins, which has a collective molecular mass greater than 150 kDa. Interacts with GSP1 and YRB2. Phosphorylated; possibly by KSP1.

It localises to the nucleus. In terms of biological role, guanine nucleotide exchange factor that promotes the exchange of GSP1/GSP2-bound GDP by GTP and controls RNA metabolism and transport. Involved in yeast pheromone response pathway and in mRNA metabolism. Involved in nuclear pore complex (NPC) assembly and required for mRNA and ribosome nuclear export. Binds chromatin and is involved NPC-mediated transcriptional control. In Saccharomyces cerevisiae (strain ATCC 204508 / S288c) (Baker's yeast), this protein is Guanine nucleotide exchange factor SRM1 (SRM1).